Here is a 430-residue protein sequence, read N- to C-terminus: Serine/threonine transporter SstT (430 aa).

The next 9 helical transmembrane spans lie at Ile24–Ile44, Phe47–Val67, Phe82–Leu102, Ala144–Met164, Val186–Val206, Leu223–Phe243, Ile294–Met314, Leu320–Ala340, and Phe361–Ile381.

This sequence belongs to the dicarboxylate/amino acid:cation symporter (DAACS) (TC 2.A.23) family.

The protein resides in the cell membrane. The enzyme catalyses L-serine(in) + Na(+)(in) = L-serine(out) + Na(+)(out). It carries out the reaction L-threonine(in) + Na(+)(in) = L-threonine(out) + Na(+)(out). In terms of biological role, involved in the import of serine and threonine into the cell, with the concomitant import of sodium (symport system). The protein is Serine/threonine transporter SstT of Bifidobacterium adolescentis (strain ATCC 15703 / DSM 20083 / NCTC 11814 / E194a).